Here is a 312-residue protein sequence, read N- to C-terminus: Methionyl-tRNA formyltransferase (312 aa).

(6S)-5,6,7,8-tetrahydrofolate is bound at residue 110–113 (SLLP).

This sequence belongs to the Fmt family.

The catalysed reaction is L-methionyl-tRNA(fMet) + (6R)-10-formyltetrahydrofolate = N-formyl-L-methionyl-tRNA(fMet) + (6S)-5,6,7,8-tetrahydrofolate + H(+). In terms of biological role, attaches a formyl group to the free amino group of methionyl-tRNA(fMet). The formyl group appears to play a dual role in the initiator identity of N-formylmethionyl-tRNA by promoting its recognition by IF2 and preventing the misappropriation of this tRNA by the elongation apparatus. In Mycobacterium marinum (strain ATCC BAA-535 / M), this protein is Methionyl-tRNA formyltransferase.